A 246-amino-acid polypeptide reads, in one-letter code: 5'-nucleotidase SurE (246 aa).

Residues D8, D9, S39, and N91 each coordinate a divalent metal cation.

This sequence belongs to the SurE nucleotidase family. The cofactor is a divalent metal cation.

It localises to the cytoplasm. The enzyme catalyses a ribonucleoside 5'-phosphate + H2O = a ribonucleoside + phosphate. In terms of biological role, nucleotidase that shows phosphatase activity on nucleoside 5'-monophosphates. The protein is 5'-nucleotidase SurE of Actinobacillus succinogenes (strain ATCC 55618 / DSM 22257 / CCUG 43843 / 130Z).